Consider the following 636-residue polypeptide: Alpha-L-iduronidase (636 aa).

Residues 1–16 (MLSLLLVLTTLARIHA) form the signal peptide. 3 residues coordinate alpha-D-mannopyranose: Pro-39, Ile-43, and His-45. Residues His-78, Asn-169, and Glu-170 each contribute to the alpha-L-iduronate site. Glu-170 (proton donor) is an active-site residue. The N-linked (GlcNAc...) asparagine glycan is linked to Asn-180. Lys-257 lines the alpha-L-iduronate pocket. An N-linked (GlcNAc...) asparagine glycan is attached at Asn-268. Residues Glu-293 and Gly-299 each coordinate alpha-L-iduronate. Glu-293 functions as the Nucleophile in the catalytic mechanism. Residue Trp-300 coordinates alpha-D-mannopyranose. Residues Asp-342 and Arg-356 each coordinate alpha-L-iduronate. 4 N-linked (GlcNAc...) asparagine glycosylation sites follow: Asn-365, Asn-448, Asn-453, and Asn-483. A disulfide bond links Cys-529 and Cys-565. The N-linked (GlcNAc...) asparagine glycan is linked to Asn-622.

This sequence belongs to the glycosyl hydrolase 39 family.

It is found in the lysosome. The enzyme catalyses Hydrolysis of unsulfated alpha-L-iduronosidic linkages in dermatan sulfate.. Functionally, essential lysosomal hydrolase responsible for the degradation of glycosaminoglycans (GAG) such as heparan sulfate. Required for lysosome function and autophagy. Consequently, has an essential role in the development, maintenance and function of various cells, tissues, and organs, including the muscles and the central nervous system (CNS). The sequence is that of Alpha-L-iduronidase from Drosophila melanogaster (Fruit fly).